The sequence spans 344 residues: Ion-translocating oxidoreductase complex subunit D (344 aa).

4 consecutive transmembrane segments (helical) span residues 23 to 43 (LVLG…GPGT), 44 to 64 (LLNL…MLAL), 77 to 99 (SALV…WLTL), and 120 to 140 (PFNP…LEMT). An FMN phosphoryl threonine modification is found at Thr-172. A run of 5 helical transmembrane segments spans residues 198-218 (LGSA…LFLL), 222-242 (LFTW…SLLF), 252-272 (GSPL…FIVT), 285-305 (LVFG…GGYP), and 306-326 (DGVA…DYYT).

It belongs to the NqrB/RnfD family. The complex is composed of six subunits: RnfA, RnfB, RnfC, RnfD, RnfE and RnfG. It depends on FMN as a cofactor.

The protein resides in the cell inner membrane. Functionally, part of a membrane-bound complex that couples electron transfer with translocation of ions across the membrane. This chain is Ion-translocating oxidoreductase complex subunit D, found in Pseudomonas aeruginosa (strain UCBPP-PA14).